The chain runs to 284 residues: Nucleotide-binding protein VSAL_I0495 (284 aa).

Glycine 8–serine 15 contacts ATP. Position 56-59 (aspartate 56–asparagine 59) interacts with GTP.

This sequence belongs to the RapZ-like family.

Functionally, displays ATPase and GTPase activities. The polypeptide is Nucleotide-binding protein VSAL_I0495 (Aliivibrio salmonicida (strain LFI1238) (Vibrio salmonicida (strain LFI1238))).